The chain runs to 153 residues: Aspartate carbamoyltransferase regulatory chain (153 aa).

The Zn(2+) site is built by Cys109, Cys114, Cys138, and Cys141.

It belongs to the PyrI family. In terms of assembly, contains catalytic and regulatory chains. It depends on Zn(2+) as a cofactor.

In terms of biological role, involved in allosteric regulation of aspartate carbamoyltransferase. This Edwardsiella ictaluri (strain 93-146) protein is Aspartate carbamoyltransferase regulatory chain.